The primary structure comprises 201 residues: uncharacterized protein (201 aa).

The N-terminal stretch at 1–25 (MYRAGVTLLVVAVVSLGRWDVVTMA) is a signal peptide. At 26 to 170 (AAIGIGWYEP…AYFRRSNHRA (145 aa)) the chain is on the extracellular side. 9 N-linked (GlcNAc...) asparagine; by host glycosylation sites follow: Asn46, Asn49, Asn55, Asn84, Asn95, Asn113, Asn122, Asn137, and Asn144. Residues 171 to 191 (FMIVILTQVVFVVFIINASFI) form a helical membrane-spanning segment. At 192 to 201 (WSWTFRRHKR) the chain is on the cytoplasmic side.

The protein belongs to the HHV-5 UL120 protein family.

Its subcellular location is the host membrane. This is an uncharacterized protein from Homo sapiens (Human).